A 336-amino-acid chain; its full sequence is 4-hydroxythreonine-4-phosphate dehydrogenase (336 aa).

Substrate is bound at residue Thr-140. Residues His-171, His-216, and His-271 each contribute to the a divalent metal cation site. Residues Lys-279, Asn-288, and Arg-297 each contribute to the substrate site.

Belongs to the PdxA family. In terms of assembly, homodimer. Zn(2+) serves as cofactor. It depends on Mg(2+) as a cofactor. Requires Co(2+) as cofactor.

Its subcellular location is the cytoplasm. The enzyme catalyses 4-(phosphooxy)-L-threonine + NAD(+) = 3-amino-2-oxopropyl phosphate + CO2 + NADH. It functions in the pathway cofactor biosynthesis; pyridoxine 5'-phosphate biosynthesis; pyridoxine 5'-phosphate from D-erythrose 4-phosphate: step 4/5. Catalyzes the NAD(P)-dependent oxidation of 4-(phosphooxy)-L-threonine (HTP) into 2-amino-3-oxo-4-(phosphooxy)butyric acid which spontaneously decarboxylates to form 3-amino-2-oxopropyl phosphate (AHAP). In Erythrobacter litoralis (strain HTCC2594), this protein is 4-hydroxythreonine-4-phosphate dehydrogenase.